Reading from the N-terminus, the 262-residue chain is Tryptophan synthase alpha chain (262 aa).

Residues E48 and D59 each act as proton acceptor in the active site.

It belongs to the TrpA family. Tetramer of two alpha and two beta chains.

It catalyses the reaction (1S,2R)-1-C-(indol-3-yl)glycerol 3-phosphate + L-serine = D-glyceraldehyde 3-phosphate + L-tryptophan + H2O. Its pathway is amino-acid biosynthesis; L-tryptophan biosynthesis; L-tryptophan from chorismate: step 5/5. Functionally, the alpha subunit is responsible for the aldol cleavage of indoleglycerol phosphate to indole and glyceraldehyde 3-phosphate. This chain is Tryptophan synthase alpha chain, found in Helicobacter pylori (strain J99 / ATCC 700824) (Campylobacter pylori J99).